The chain runs to 362 residues: CLIP domain-containing serine protease B10 (362 aa).

Positions 1 to 19 (MAKVVDCVLLLAFIAVVRG) are cleaved as a signal peptide. In terms of domain architecture, Clip spans 22–75 (ACRTPDHRDGVCHPVQQCPSVRDEFFNSDRVLSEDEIDYLRKLQCKTKDVTICC). Cystine bridges form between Cys23–Cys74, Cys33–Cys66, and Cys39–Cys75. The Peptidase S1 domain maps to 110–361 (IIGGNYTAID…YLDWIRQNIR (252 aa)). Residue Asn114 is glycosylated (N-linked (GlcNAc...) asparagine). A disulfide bridge connects residues Cys140 and Cys156. Residues His155 and Asp220 each act as charge relay system in the active site. A glycan (N-linked (GlcNAc...) asparagine) is linked at Asn254. Cystine bridges form between Cys285-Cys300 and Cys310-Cys337. Ser314 serves as the catalytic Charge relay system.

The protein belongs to the peptidase S1 family. CLIP subfamily. As to quaternary structure, forms a covalent heterodimer with SRPN2; the interaction inhibits CLIPB10 catalytic activity. Post-translationally, cleaved by an unknown protease into an active form.

The protein localises to the secreted. Its activity is regulated as follows. Inhibited by serpin SRPN2. Serine protease which preferentially cleaves after arginine residues. Involved in the innate immune response against parasite P.bergei infection by activating the melanization cascade. Probably in the hemolymph, cleaves and activates prophenoloxidase (PPO), which functions in the formation of pigments such as melanin and other polyphenolic compounds. In the susceptible strain G3, appears to be dispensable for ookinete elimination which occurs by lysis. This is CLIP domain-containing serine protease B10 from Anopheles gambiae (African malaria mosquito).